A 323-amino-acid chain; its full sequence is Lipoyl synthase (323 aa).

The segment at 1-27 is disordered; that stretch reads MVTILDRTSSDEKRIRHPEKAHRPDTE. Positions 61, 66, 72, 87, 91, 94, and 300 each coordinate [4Fe-4S] cluster. A Radical SAM core domain is found at 73–289; sequence WEKKHATFMI…ETVAYAKGFL (217 aa).

It belongs to the radical SAM superfamily. Lipoyl synthase family. The cofactor is [4Fe-4S] cluster.

The protein localises to the cytoplasm. It carries out the reaction [[Fe-S] cluster scaffold protein carrying a second [4Fe-4S](2+) cluster] + N(6)-octanoyl-L-lysyl-[protein] + 2 oxidized [2Fe-2S]-[ferredoxin] + 2 S-adenosyl-L-methionine + 4 H(+) = [[Fe-S] cluster scaffold protein] + N(6)-[(R)-dihydrolipoyl]-L-lysyl-[protein] + 4 Fe(3+) + 2 hydrogen sulfide + 2 5'-deoxyadenosine + 2 L-methionine + 2 reduced [2Fe-2S]-[ferredoxin]. Its pathway is protein modification; protein lipoylation via endogenous pathway; protein N(6)-(lipoyl)lysine from octanoyl-[acyl-carrier-protein]: step 2/2. Its function is as follows. Catalyzes the radical-mediated insertion of two sulfur atoms into the C-6 and C-8 positions of the octanoyl moiety bound to the lipoyl domains of lipoate-dependent enzymes, thereby converting the octanoylated domains into lipoylated derivatives. The chain is Lipoyl synthase from Agrobacterium fabrum (strain C58 / ATCC 33970) (Agrobacterium tumefaciens (strain C58)).